The following is a 164-amino-acid chain: ATP synthase subunit b (164 aa).

The chain crosses the membrane as a helical span at residues 4 to 24; it reads LGINPTLFIAQLINFLLLIFI.

Belongs to the ATPase B chain family. F-type ATPases have 2 components, F(1) - the catalytic core - and F(0) - the membrane proton channel. F(1) has five subunits: alpha(3), beta(3), gamma(1), delta(1), epsilon(1). F(0) has four main subunits: a(1), b(2) and c(10-14). The alpha and beta chains form an alternating ring which encloses part of the gamma chain. F(1) is attached to F(0) by a central stalk formed by the gamma and epsilon chains, while a peripheral stalk is formed by the delta and b chains.

It is found in the cell membrane. In terms of biological role, f(1)F(0) ATP synthase produces ATP from ADP in the presence of a proton or sodium gradient. F-type ATPases consist of two structural domains, F(1) containing the extramembraneous catalytic core and F(0) containing the membrane proton channel, linked together by a central stalk and a peripheral stalk. During catalysis, ATP synthesis in the catalytic domain of F(1) is coupled via a rotary mechanism of the central stalk subunits to proton translocation. Component of the F(0) channel, it forms part of the peripheral stalk, linking F(1) to F(0). The sequence is that of ATP synthase subunit b from Chloroflexus aurantiacus (strain ATCC 29366 / DSM 635 / J-10-fl).